The primary structure comprises 416 residues: Adenylosuccinate synthetase (416 aa).

Residues 11-17 (GDEGKGK) and 39-41 (GHT) each bind GTP. The active-site Proton acceptor is Asp-12. Residues Asp-12 and Gly-39 each contribute to the Mg(2+) site. IMP is bound by residues 12–15 (DEGK), 37–40 (NAGH), Thr-125, Arg-139, Gln-214, Thr-229, and Arg-290. Catalysis depends on His-40, which acts as the Proton donor. 286–292 (TTTGRPR) is a substrate binding site. GTP-binding positions include Arg-292, 318–320 (KLD), and 405–407 (SLG).

This sequence belongs to the adenylosuccinate synthetase family. Homodimer. The cofactor is Mg(2+).

The protein localises to the cytoplasm. The enzyme catalyses IMP + L-aspartate + GTP = N(6)-(1,2-dicarboxyethyl)-AMP + GDP + phosphate + 2 H(+). It functions in the pathway purine metabolism; AMP biosynthesis via de novo pathway; AMP from IMP: step 1/2. Functionally, plays an important role in the de novo pathway of purine nucleotide biosynthesis. Catalyzes the first committed step in the biosynthesis of AMP from IMP. In Picrophilus torridus (strain ATCC 700027 / DSM 9790 / JCM 10055 / NBRC 100828 / KAW 2/3), this protein is Adenylosuccinate synthetase.